The sequence spans 453 residues: Bis(5'-adenosyl)-triphosphatase ENPP4 (453 aa).

Positions 1 to 18 are cleaved as a signal peptide; it reads MKLLLMLLFSGLMTGCRG. The Extracellular portion of the chain corresponds to 19–407; sequence NSSSASPPKL…DQWCINLPEA (389 aa). Aspartate 34 and threonine 70 together coordinate Zn(2+). The active-site AMP-threonine intermediate is threonine 70. 2 residues coordinate substrate: asparagine 91 and tyrosine 154. Asparagine 166 is a glycosylation site (N-linked (GlcNAc...) asparagine). Residues aspartate 189, histidine 193, aspartate 237, and histidine 238 each contribute to the Zn(2+) site. Aspartate 189 is a binding site for substrate. Cysteine 254 and cysteine 287 form a disulfide bridge. A glycan (N-linked (GlcNAc...) asparagine) is linked at asparagine 276. Position 336 (histidine 336) interacts with Zn(2+). A disulfide bridge links cysteine 394 with cysteine 401. The chain crosses the membrane as a helical span at residues 408 to 428; it reads IGIVIGALLVLTTLTCLIIIM. Over 429–453 the chain is Cytoplasmic; sequence QNRVSGPRPFSRLQLQEDDDDPLIG.

Belongs to the nucleotide pyrophosphatase/phosphodiesterase family. Requires Zn(2+) as cofactor.

The protein resides in the cell membrane. The catalysed reaction is P(1),P(3)-bis(5'-adenosyl) triphosphate + H2O = AMP + ADP + 2 H(+). In terms of biological role, hydrolyzes extracellular Ap3A into AMP and ADP, and Ap4A into AMP and ATP. Ap3A and Ap4A are diadenosine polyphosphates thought to induce proliferation of vascular smooth muscle cells. Acts as a procoagulant, mediating platelet aggregation at the site of nascent thrombus via release of ADP from Ap3A and activation of ADP receptors. This Bos taurus (Bovine) protein is Bis(5'-adenosyl)-triphosphatase ENPP4 (ENPP4).